We begin with the raw amino-acid sequence, 185 residues long: Methanol dehydrogenase activator (185 aa).

It belongs to the Nudix hydrolase family. Homodimer. The cofactor is Mg(2+).

In terms of biological role, involved in the activation of the NAD-dependent methanol dehydrogenase (MDH). MDH activation by Act involves hydrolytic removal of the nicotinamide mononucleotide (NMN) moiety of the NAD cofactor, changing its ping-pong type of reaction mechanism into a ternary complex reaction mechanism. It requires the presence of magnesium ions and is also able to use ADP-ribose. The chain is Methanol dehydrogenase activator from Bacillus methanolicus.